A 135-amino-acid polypeptide reads, in one-letter code: Holo-[acyl-carrier-protein] synthase (135 aa).

The Mg(2+) site is built by aspartate 8 and glutamate 57.

It belongs to the P-Pant transferase superfamily. AcpS family. It depends on Mg(2+) as a cofactor.

Its subcellular location is the cytoplasm. It carries out the reaction apo-[ACP] + CoA = holo-[ACP] + adenosine 3',5'-bisphosphate + H(+). Transfers the 4'-phosphopantetheine moiety from coenzyme A to a Ser of acyl-carrier-protein. This is Holo-[acyl-carrier-protein] synthase from Methylobacterium sp. (strain 4-46).